Consider the following 751-residue polypeptide: ATP-dependent DNA helicase Hel308 (751 aa).

ATP is bound by residues glutamine 20 and isoleucine 39–threonine 46. Positions glutamate 26–glutamate 196 constitute a Helicase ATP-binding domain. The DEAH box motif lies at aspartate 143–histidine 146. The Helicase C-terminal domain occupies asparagine 235–isoleucine 435.

Belongs to the helicase family. Hel308 subfamily. As to quaternary structure, monomer.

The enzyme catalyses Couples ATP hydrolysis with the unwinding of duplex DNA by translocating in the 3'-5' direction.. It catalyses the reaction ATP + H2O = ADP + phosphate + H(+). In terms of biological role, DNA-dependent ATPase and 3'-5' DNA helicase that may be involved in repair of stalled replication forks. This chain is ATP-dependent DNA helicase Hel308, found in Methanococcus vannielii (strain ATCC 35089 / DSM 1224 / JCM 13029 / OCM 148 / SB).